Consider the following 294-residue polypeptide: Ribosomal RNA small subunit methyltransferase H (294 aa).

S-adenosyl-L-methionine contacts are provided by residues 36–38 (GGH), Asp-55, Phe-82, Asp-97, and Gln-104.

It belongs to the methyltransferase superfamily. RsmH family.

The protein resides in the cytoplasm. It carries out the reaction cytidine(1402) in 16S rRNA + S-adenosyl-L-methionine = N(4)-methylcytidine(1402) in 16S rRNA + S-adenosyl-L-homocysteine + H(+). Its function is as follows. Specifically methylates the N4 position of cytidine in position 1402 (C1402) of 16S rRNA. The sequence is that of Ribosomal RNA small subunit methyltransferase H from Synechococcus sp. (strain CC9605).